The following is a 264-amino-acid chain: Na(+)-translocating NADH-quinone reductase subunit E (264 aa).

6 helical membrane passes run 11-31 (VFGIFLQATFIQNILLSNFLG), 50-70 (MSVALVLTVTGSINWVVHTFI), 90-110 (FLELIIFIVVIAAFTQILELL), 123-143 (GIFLPLIAVNCAILGGVLFGI), 149-169 (FIPMMIFSLGAGCGWWLAIVL), and 189-209 (MGISFITTGLIAMAFMSLTGI).

This sequence belongs to the NqrDE/RnfAE family. In terms of assembly, composed of six subunits; NqrA, NqrB, NqrC, NqrD, NqrE and NqrF.

The protein localises to the cell inner membrane. It carries out the reaction a ubiquinone + n Na(+)(in) + NADH + H(+) = a ubiquinol + n Na(+)(out) + NAD(+). NQR complex catalyzes the reduction of ubiquinone-1 to ubiquinol by two successive reactions, coupled with the transport of Na(+) ions from the cytoplasm to the periplasm. NqrA to NqrE are probably involved in the second step, the conversion of ubisemiquinone to ubiquinol. The sequence is that of Na(+)-translocating NADH-quinone reductase subunit E from Chlamydia caviae (strain ATCC VR-813 / DSM 19441 / 03DC25 / GPIC) (Chlamydophila caviae).